Consider the following 358-residue polypeptide: Chondroadherin (358 aa).

The N-terminal stretch at 1–20 (MARVLLLSLVFLAILLPALA) is a signal peptide. The LRRNT domain maps to 21–50 (ACPQNCHCHGDLQHVICDKVGLQKIPKVSE). A disulfide bridge connects residues Cys22 and Cys37. 10 LRR repeats span residues 51 to 72 (TTKL…SFRT), 75 to 96 (NLVS…AFRG), 99 to 120 (QLIY…AFDD), 123 to 144 (ELTY…LLSP), 147 to 168 (NLFI…AFQG), 171 to 192 (DLRW…SLDD), 195 to 216 (NLAK…ALSK), 219 to 240 (VVEE…AFQS), 244 to 265 (YLET…AFAG), and 268 to 289 (TLKH…FPFD). The O-linked (GalNAc...) serine glycan is linked to Ser143. The 49-residue stretch at 299 to 347 (NPWKCTCQLRGLRRWLEAKTSRPDATCSSPAKFKGQRIRDTDALRSCKS) folds into the LRRCT domain. Disulfide bonds link Cys303–Cys345 and Cys305–Cys325. Residues 321–358 (PDATCSSPAKFKGQRIRDTDALRSCKSPTKRSKKAGRH) are disordered. Residues 348–358 (PTKRSKKAGRH) show a composition bias toward basic residues.

The protein belongs to the small leucine-rich proteoglycan (SLRP) family. SLRP class IV subfamily. In terms of assembly, mostly monomeric. Present in femoral head and rib cartilage, as well as in tendon. Detected in bone marrow.

Its subcellular location is the secreted. It is found in the extracellular space. It localises to the extracellular matrix. Promotes attachment of chondrocytes, fibroblasts, and osteoblasts. This binding is mediated (at least for chondrocytes and fibroblasts) by the integrin alpha(2)beta(1). May play an important role in the regulation of chondrocyte growth and proliferation. In Rattus norvegicus (Rat), this protein is Chondroadherin (Chad).